A 313-amino-acid polypeptide reads, in one-letter code: tRNA dimethylallyltransferase 2 (313 aa).

Residue 16–23 coordinates ATP; that stretch reads GPTASGKT. 18–23 serves as a coordination point for substrate; it reads TASGKT. Interaction with substrate tRNA stretches follow at residues 41 to 44 and 161 to 165; these read DSRQ and QRTIR.

It belongs to the IPP transferase family. As to quaternary structure, monomer. Requires Mg(2+) as cofactor.

The enzyme catalyses adenosine(37) in tRNA + dimethylallyl diphosphate = N(6)-dimethylallyladenosine(37) in tRNA + diphosphate. Functionally, catalyzes the transfer of a dimethylallyl group onto the adenine at position 37 in tRNAs that read codons beginning with uridine, leading to the formation of N6-(dimethylallyl)adenosine (i(6)A). In Pelobacter propionicus (strain DSM 2379 / NBRC 103807 / OttBd1), this protein is tRNA dimethylallyltransferase 2.